Reading from the N-terminus, the 298-residue chain is tRNA pseudouridine synthase B (298 aa).

Residue Asp-45 is the Nucleophile of the active site.

The protein belongs to the pseudouridine synthase TruB family. Type 1 subfamily.

It catalyses the reaction uridine(55) in tRNA = pseudouridine(55) in tRNA. Functionally, responsible for synthesis of pseudouridine from uracil-55 in the psi GC loop of transfer RNAs. This Thiobacillus denitrificans (strain ATCC 25259 / T1) protein is tRNA pseudouridine synthase B.